A 290-amino-acid polypeptide reads, in one-letter code: Ribosomal RNA small subunit methyltransferase A (290 aa).

Residues N27, L29, G54, E75, D100, and N125 each contribute to the S-adenosyl-L-methionine site.

This sequence belongs to the class I-like SAM-binding methyltransferase superfamily. rRNA adenine N(6)-methyltransferase family. RsmA subfamily.

The protein resides in the cytoplasm. The enzyme catalyses adenosine(1518)/adenosine(1519) in 16S rRNA + 4 S-adenosyl-L-methionine = N(6)-dimethyladenosine(1518)/N(6)-dimethyladenosine(1519) in 16S rRNA + 4 S-adenosyl-L-homocysteine + 4 H(+). Its function is as follows. Specifically dimethylates two adjacent adenosines (A1518 and A1519) in the loop of a conserved hairpin near the 3'-end of 16S rRNA in the 30S particle. May play a critical role in biogenesis of 30S subunits. The chain is Ribosomal RNA small subunit methyltransferase A from Streptococcus pneumoniae (strain ATCC 700669 / Spain 23F-1).